The primary structure comprises 396 residues: S-adenosylmethionine synthase (396 aa).

An ATP-binding site is contributed by His16. Asp18 lines the Mg(2+) pocket. Glu44 is a K(+) binding site. L-methionine-binding residues include Glu57 and Gln100. The segment at 100–110 (QSVDIAQGVDR) is flexible loop. Residues 165–167 (DAK), Asp240, 246–247 (RK), Ala263, and Lys267 each bind ATP. Asp240 provides a ligand contact to L-methionine. Lys271 serves as a coordination point for L-methionine.

It belongs to the AdoMet synthase family. Homotetramer; dimer of dimers. Requires Mg(2+) as cofactor. K(+) serves as cofactor.

The protein localises to the cytoplasm. The catalysed reaction is L-methionine + ATP + H2O = S-adenosyl-L-methionine + phosphate + diphosphate. It functions in the pathway amino-acid biosynthesis; S-adenosyl-L-methionine biosynthesis; S-adenosyl-L-methionine from L-methionine: step 1/1. Catalyzes the formation of S-adenosylmethionine (AdoMet) from methionine and ATP. The overall synthetic reaction is composed of two sequential steps, AdoMet formation and the subsequent tripolyphosphate hydrolysis which occurs prior to release of AdoMet from the enzyme. This Pseudomonas syringae pv. syringae (strain B728a) protein is S-adenosylmethionine synthase.